The following is a 625-amino-acid chain: Prothrombin (625 aa).

An N-terminal signal peptide occupies residues 1–24; it reads MARVRGPRLPGCLALAALFSLVHS. A propeptide spanning residues 25–43 is cleaved from the precursor; sequence QHVFLAHQQASSLLQRARR. A Gla domain is found at 44–90; it reads ANKGFLEEVRKGNLERECLEEPCSREEAFEALESLSATDAFWAKYTA. 4-carboxyglutamate is present on residues Glu50, Glu51, Glu58, Glu60, Glu63, Glu64, Glu69, Glu70, Glu73, and Glu76. A disulfide bridge links Cys61 with Cys66. 11 disulfide bridges follow: Cys91–Cys104, Cys109–Cys187, Cys130–Cys170, Cys158–Cys182, Cys214–Cys292, Cys235–Cys275, Cys263–Cys287, Cys339–Cys485, Cys394–Cys410, Cys539–Cys553, and Cys567–Cys597. Kringle domains are found at residues 109-187 and 214-292; these read CAEG…VPVC and CVPD…LNYC. 2 N-linked (GlcNAc...) asparagine glycosylation sites follow: Asn120 and Asn144. A Peptidase S1 domain is found at 367–621; the sequence is IVEGQDAEVG…LKKWIQKVID (255 aa). The Charge relay system role is filled by His409. Asn419 carries N-linked (GlcNAc...) asparagine glycosylation. The active-site Charge relay system is the Asp465. A high affinity receptor-binding region which is also known as the TP508 peptide region spans residues 554 to 576; that stretch reads AGYKPGEGKRGDACEGDSGGPFV. The active-site Charge relay system is Ser571.

It belongs to the peptidase S1 family. As to quaternary structure, heterodimer (named alpha-thrombin) of a light and a heavy chain; disulfide-linked. Forms a heterodimer with SERPINA5. In plasma, interacts (via N-terminus) with alpha-1-microglobulin; this interaction does not prevent the activation of prothrombin to thrombin. Post-translationally, the gamma-carboxyglutamyl residues, which bind calcium ions, result from the carboxylation of glutamyl residues by a microsomal enzyme, the vitamin K-dependent carboxylase. The modified residues are necessary for the calcium-dependent interaction with a negatively charged phospholipid surface, which is essential for the conversion of prothrombin to thrombin. In terms of processing, in the penultimate step of the coagulation cascade, prothrombin is converted to thrombin by the prothrombinase complex composed of factor Xa (F10), cofactor Va (F5), and phospholipids. This activation requires factor Xa-catalyzed sequential cleavage at 2 sites, Arg-317 and Arg-366, along 2 possible pathways. In the first pathway, the first cleavage occurs at Arg-317, leading to the formation of the inactive intermediate prethrombin-2. This pathway preferentially occurs on platelets and in the absence of cofactor Va. In the second pathway, the first cleavage occurs at Arg-366, which separates protease domain into 2 chains that remain connected through a disulfide bond and generates the active intermediate meizothrombin. The presence of cofactor Va directs activation along the meizothrombin pathway and greatly accelerates the rate of cleavage at Arg-366, but has a smaller effect on the cleavage of meizothrombin at Arg-317. Meizothrombin accumulates as an intermediate when prothrombinase is assembled on the membrane of red blood cells. Expressed by the liver and secreted in plasma.

Its subcellular location is the secreted. The protein localises to the extracellular space. The catalysed reaction is Selective cleavage of Arg-|-Gly bonds in fibrinogen to form fibrin and release fibrinopeptides A and B.. Activity is promoted in the presence of negatively charged surfaces, such as polyphosphate and dextran sulfate. Inhibited by SERPINA5. In terms of biological role, thrombin, which cleaves bonds after Arg and Lys, converts fibrinogen to fibrin and activates factors V, VII, VIII, XIII, and, in complex with thrombomodulin, protein C. Functions in blood homeostasis, inflammation and wound healing. Activates coagulation factor XI (F11); activation is promoted by the contact with negatively charged surfaces. Triggers the production of pro-inflammatory cytokines, such as MCP-1/CCL2 and IL8/CXCL8, in endothelial cells. This is Prothrombin (F2) from Bos taurus (Bovine).